The following is a 314-amino-acid chain: Carbamate kinase (314 aa).

Belongs to the carbamate kinase family. Homodimer.

It localises to the cytoplasm. The enzyme catalyses hydrogencarbonate + NH4(+) + ATP = carbamoyl phosphate + ADP + H2O + H(+). Carbamate kinase that plays a biosynthetic role in that it produces carbamoyl-phosphate. In Pyrococcus furiosus (strain ATCC 43587 / DSM 3638 / JCM 8422 / Vc1), this protein is Carbamate kinase (cpkA).